Here is a 435-residue protein sequence, read N- to C-terminus: E3 ubiquitin-protein ligase RING1 (435 aa).

Residues 46–86 form an RING-type zinc finger; it reads CPICLDMLKKTMTTKECLHRFCSDCIVTALRSGNKECPTCR. The tract at residues 144–322 is disordered; that stretch reads KLQSQNRPQR…TEGEGNGELG (179 aa). Residues 157 to 170 show a composition bias toward gly residues; it reads KGGGGGGGGGGNGN. Composition is skewed to low complexity over residues 171–188, 202–211, 222–251, and 259–278; these read GAANVAAPPAPGAPTAVG, SNDSNSNTNS, SGTSAASAITSASNAAPSSSANSGASTSAT, and SNPPSVRSTPSPVPSNSSSS. S202 is modified (phosphoserine). S266 is modified (phosphoserine). The residue at position 267 (T267) is a Phosphothreonine. The residue at position 269 (S269) is a Phosphoserine. Positions 309–322 are enriched in acidic residues; that stretch reads SNIDTEGEGNGELG.

Interacts with ORD. Component of PRC1 complex, which contains many PcG proteins like Pc, ph, Scm, Psc, Sce and also chromatin remodeling proteins such as histone deacetylases. This complex is distinct from the Esc/E(z) complex, at least composed of esc, E(z), Su(z)12, HDAC1/Rpd3 and Caf1-55. The two complexes however cooperate and interact together during the first 3 hours of development to establish PcG silencing. Ubiquitously expressed in syncytial blastoderm embryos. Ubiquitously expressed until stage 11. Then, it is only expressed in the neuroectoderm. Later in embryonic development, it is only expressed in the CNS. In larvae, it is expressed in all imaginal disks. Expressed in the male and female gonads.

Its subcellular location is the nucleus. It localises to the chromosome. The catalysed reaction is S-ubiquitinyl-[E2 ubiquitin-conjugating enzyme]-L-cysteine + [acceptor protein]-L-lysine = [E2 ubiquitin-conjugating enzyme]-L-cysteine + N(6)-ubiquitinyl-[acceptor protein]-L-lysine.. Its pathway is protein modification; protein ubiquitination. In terms of biological role, E3 ubiquitin-protein ligase that mediates monoubiquitination of 'Lys-118' of histone H2A, thereby playing a central role in histone code and gene regulation. H2A 'Lys-118' ubiquitination gives a specific tag for epigenetic transcriptional repression. Polycomb group (PcG) protein. PcG proteins act by forming multiprotein complexes, which are required to maintain the transcriptionally repressive state of homeotic genes throughout development. PcG proteins are not required to initiate repression, but to maintain it during later stages of development. PcG complexes act via modification of histones, such as methylation, deacetylation, ubiquitination rendering chromatin heritably changed in its expressibility. May play a role in meiotic sister chromatid cohesion. The sequence is that of E3 ubiquitin-protein ligase RING1 (Sce) from Drosophila melanogaster (Fruit fly).